A 600-amino-acid chain; its full sequence is Long-chain-fatty-acid--CoA ligase FadD15 (600 aa).

The protein belongs to the ATP-dependent AMP-binding enzyme family.

The catalysed reaction is a long-chain fatty acid + ATP + CoA = a long-chain fatty acyl-CoA + AMP + diphosphate. It functions in the pathway lipid metabolism; fatty acid biosynthesis. Its function is as follows. Catalyzes the activation of long-chain fatty acids as acyl-coenzyme A (acyl-CoA), which are then transferred to the multifunctional polyketide synthase (PKS) type III for further chain extension. This is Long-chain-fatty-acid--CoA ligase FadD15 (fadD15) from Mycobacterium bovis (strain ATCC BAA-935 / AF2122/97).